Consider the following 782-residue polypeptide: General transcription and DNA repair factor IIH helicase/translocase subunit XPB (782 aa).

Residues 1 to 11 (MGKRDRADREK) show a composition bias toward basic and acidic residues. The interval 1 to 51 (MGKRDRADREKKKSKKRHYEDEEDEEDDAPGNDTQEAVPSAAGKQVDESGT) is disordered. Residues 6-18 (RADREKKKSKKRH) carry the Nuclear localization signal motif. Over residues 21–30 (DEEDEEDDAP) the composition is skewed to acidic residues. In terms of domain architecture, Helicase ATP-binding spans 327–488 (MFGNGRARSG…DLNFLIGPKL (162 aa)). An ATP-binding site is contributed by 340–347 (LPCGAGKS). Residues 441-444 (DEVH) carry the DEVH box motif. One can recognise a Helicase C-terminal domain in the interval 542–702 (RACQFLIKFH…LAGMEEEDLA (161 aa)). Position 686 is a phosphoserine (serine 686). Residue serine 751 is modified to Phosphoserine; by CK2.

This sequence belongs to the helicase family. RAD25/XPB subfamily. Component of the 7-subunit TFIIH core complex composed of XPB/ERCC3, XPD/ERCC2, GTF2H1, GTF2H2, GTF2H3, GTF2H4 and GTF2H5, which is active in NER. The core complex associates with the 3-subunit CDK-activating kinase (CAK) module composed of CCNH/cyclin H, CDK7 and MNAT1 to form the 10-subunit holoenzyme (holo-TFIIH) active in transcription. Interacts with PUF60. Interacts with ATF7IP. Interacts with KAT2A; leading to KAT2A recruitment to promoters and acetylation of histones. Part of TBP-based Pol II pre-initiation complex (PIC), in which Pol II core assembles with general transcription factors and other specific initiation factors including GTF2E1, GTF2E2, GTF2F1, GTF2F2, TCEA1, ERCC2, ERCC3, GTF2H2, GTF2H3, GTF2H4, GTF2H5, GTF2A1, GTF2A2, GTF2B and TBP; this large multi-subunit PIC complex mediates DNA unwinding and targets Pol II core to the transcription start site where the first phosphodiester bond forms. Post-translationally, phosphorylation on Ser-751 by CK2 controls the 5'-excision activity of ERCC1-XPF endonuclease; phosphorylated protein inhibits the excision activity and thus NER. Dephosphorylation reactivates the 5'-excision step. Phosphorylation has no effect on transcription or the 3'-5' helicase activity.

The protein localises to the nucleus. The enzyme catalyses Couples ATP hydrolysis with the unwinding of duplex DNA by translocating in the 3'-5' direction.. It carries out the reaction ATP + H2O = ADP + phosphate + H(+). With respect to regulation, phosphorylation on Ser-751 by CK2 controls the 5'-excision activity of ERCC1-XPF endonuclease; phosphorylated protein inhibits the excision activity and thus NER. ATPase activity is stimulated by TFIIH subunit p52 (GTF2H4). DNA translocase activity by this subunit in TFIIH is stimulated by XPA, ERCC5/XPG and XFP plus ERCC1. Functionally, ATP-dependent 3'-5' DNA helicase/translocase; binds dsDNA rather than ssDNA, unzipping it in a translocase rather than classical helicase activity. Component of the general transcription and DNA repair factor IIH (TFIIH) core complex. When complexed to CDK-activating kinase (CAK), involved in RNA transcription by RNA polymerase II. The ATPase activity of XPB/ERCC3, but not its helicase activity, is required for DNA opening; it may wrap around the damaged DNA wedging it open, causing localized melting and twisting that allows XPD/ERCC2 helicase to anchor. The ATP-dependent helicase activity of XPB/ERCC3 may be required for promoter escape. Also involved in transcription-coupled nucleotide excision repair (NER) of damaged DNA. In NER, TFIIH acts by opening DNA around the lesion to allow the excision of the damaged oligonucleotide and its replacement by a new DNA fragment. The structure of the TFIIH transcription complex differs from the NER-TFIIH complex; large movements by XPD/ERCC2 and XPB/ERCC3 are stabilized by XPA. This is General transcription and DNA repair factor IIH helicase/translocase subunit XPB (ERCC3) from Bos taurus (Bovine).